The chain runs to 379 residues: UDP-4-amino-4-deoxy-L-arabinose--oxoglutarate aminotransferase (379 aa).

N6-(pyridoxal phosphate)lysine is present on Lys182.

Belongs to the DegT/DnrJ/EryC1 family. ArnB subfamily. Homodimer. Requires pyridoxal 5'-phosphate as cofactor.

The enzyme catalyses UDP-4-amino-4-deoxy-beta-L-arabinose + 2-oxoglutarate = UDP-beta-L-threo-pentopyranos-4-ulose + L-glutamate. It participates in nucleotide-sugar biosynthesis; UDP-4-deoxy-4-formamido-beta-L-arabinose biosynthesis; UDP-4-deoxy-4-formamido-beta-L-arabinose from UDP-alpha-D-glucuronate: step 2/3. Its pathway is bacterial outer membrane biogenesis; lipopolysaccharide biosynthesis. Its function is as follows. Catalyzes the conversion of UDP-4-keto-arabinose (UDP-Ara4O) to UDP-4-amino-4-deoxy-L-arabinose (UDP-L-Ara4N). The modified arabinose is attached to lipid A and is required for resistance to polymyxin and cationic antimicrobial peptides. The sequence is that of UDP-4-amino-4-deoxy-L-arabinose--oxoglutarate aminotransferase from Klebsiella pneumoniae subsp. pneumoniae (strain ATCC 700721 / MGH 78578).